A 281-amino-acid chain; its full sequence is Large ribosomal subunit protein uL2 (281 aa).

Residues 210-281 (RTRYAGQRPH…RGRKRGPHTR (72 aa)) are disordered. Over residues 254-281 (TVGKKTRSHKARSNKFIVRGRKRGPHTR) the composition is skewed to basic residues.

Belongs to the universal ribosomal protein uL2 family. As to quaternary structure, part of the 50S ribosomal subunit. Forms a bridge to the 30S subunit in the 70S ribosome.

In terms of biological role, one of the primary rRNA binding proteins. Required for association of the 30S and 50S subunits to form the 70S ribosome, for tRNA binding and peptide bond formation. It has been suggested to have peptidyltransferase activity; this is somewhat controversial. Makes several contacts with the 16S rRNA in the 70S ribosome. The protein is Large ribosomal subunit protein uL2 of Limosilactobacillus reuteri subsp. reuteri (strain JCM 1112) (Lactobacillus reuteri).